Reading from the N-terminus, the 274-residue chain is Diaminopimelate epimerase (274 aa).

Residues N11, Q44, and N64 each contribute to the substrate site. The active-site Proton donor is C73. Substrate contacts are provided by residues 74-75 (GN), N157, N190, and 208-209 (ER). C217 acts as the Proton acceptor in catalysis. 218–219 (GS) contributes to the substrate binding site.

This sequence belongs to the diaminopimelate epimerase family. As to quaternary structure, homodimer.

It is found in the cytoplasm. The catalysed reaction is (2S,6S)-2,6-diaminopimelate = meso-2,6-diaminopimelate. It participates in amino-acid biosynthesis; L-lysine biosynthesis via DAP pathway; DL-2,6-diaminopimelate from LL-2,6-diaminopimelate: step 1/1. Functionally, catalyzes the stereoinversion of LL-2,6-diaminopimelate (L,L-DAP) to meso-diaminopimelate (meso-DAP), a precursor of L-lysine and an essential component of the bacterial peptidoglycan. The chain is Diaminopimelate epimerase from Salmonella agona (strain SL483).